A 264-amino-acid polypeptide reads, in one-letter code: S-adenosylmethionine decarboxylase proenzyme (264 aa).

Residue Ser112 is the Schiff-base intermediate with substrate; via pyruvic acid of the active site. At Ser112 the chain carries Pyruvic acid (Ser); by autocatalysis. His117 (proton acceptor; for processing activity) is an active-site residue. The active-site Proton donor; for catalytic activity is Cys140.

This sequence belongs to the prokaryotic AdoMetDC family. Type 2 subfamily. As to quaternary structure, heterooctamer of four alpha and four beta chains arranged as a tetramer of alpha/beta heterodimers. It depends on pyruvate as a cofactor. Is synthesized initially as an inactive proenzyme. Formation of the active enzyme involves a self-maturation process in which the active site pyruvoyl group is generated from an internal serine residue via an autocatalytic post-translational modification. Two non-identical subunits are generated from the proenzyme in this reaction, and the pyruvate is formed at the N-terminus of the alpha chain, which is derived from the carboxyl end of the proenzyme. The post-translation cleavage follows an unusual pathway, termed non-hydrolytic serinolysis, in which the side chain hydroxyl group of the serine supplies its oxygen atom to form the C-terminus of the beta chain, while the remainder of the serine residue undergoes an oxidative deamination to produce ammonia and the pyruvoyl group blocking the N-terminus of the alpha chain.

It catalyses the reaction S-adenosyl-L-methionine + H(+) = S-adenosyl 3-(methylsulfanyl)propylamine + CO2. Its pathway is amine and polyamine biosynthesis; S-adenosylmethioninamine biosynthesis; S-adenosylmethioninamine from S-adenosyl-L-methionine: step 1/1. Its function is as follows. Catalyzes the decarboxylation of S-adenosylmethionine to S-adenosylmethioninamine (dcAdoMet), the propylamine donor required for the synthesis of the polyamines spermine and spermidine from the diamine putrescine. This Salmonella choleraesuis (strain SC-B67) protein is S-adenosylmethionine decarboxylase proenzyme.